Here is a 366-residue protein sequence, read N- to C-terminus: MAVTGIVAEFNPFHYGHKYLLEQAEGLKIVAMSGNFVQRGEPAIVDKWTRAQMALENGADIVVELPFQVAVQSADYFAQGAVDILSTMGADTLAFGTEEDLDYSEIARIYEEKAEQMTAFLETLDDSLSYPQKTQKMWESFTGIDFSGNTPNHILALAYAKASAGKNLRLQPIKRQGAAYHSQEKNQMMASATAIRKHISDRTFVLQSTPSSELLLMAPQVNWENYFDLVRYHILSQEQLDHVFQVNQEIANRLKSAIVHVHSIEELVDKVSTKRYTKARVRRILTYILVNARENNLPNGVHVLGFTEKGQEHLKKMKKSISIVSRIGAVPWDQQTQTADRIYQLGHSDIKEQNFGRSPIRIEKLG.

ATP is bound by residues 7-20 (VAEF…HKYL), Gly-96, Asn-152, and Arg-175.

Belongs to the TmcAL family.

It localises to the cytoplasm. It catalyses the reaction cytidine(34) in elongator tRNA(Met) + acetate + ATP = N(4)-acetylcytidine(34) in elongator tRNA(Met) + AMP + diphosphate. Its function is as follows. Catalyzes the formation of N(4)-acetylcytidine (ac(4)C) at the wobble position of elongator tRNA(Met), using acetate and ATP as substrates. First activates an acetate ion to form acetyladenylate (Ac-AMP) and then transfers the acetyl group to tRNA to form ac(4)C34. This chain is tRNA(Met) cytidine acetate ligase, found in Streptococcus uberis (strain ATCC BAA-854 / 0140J).